An 871-amino-acid chain; its full sequence is MSESTAYTIILHGNDATGKSTLVPALRAAGEVIYARGDDDATLEDTIVVRSFDKFTLRLADDDRGPLPQSYTDKDGVQRRIVRIILDADLDVLQARLAKRPSTDQWESEKSLFYFRARFLGHQELAAYHGLPVINTGEKSLDETMAEIIALARNPETLALFSKLALRTLTPEDVASLADRRAVIAGVDYAKRLEDIIAAECGETSLFTPEDVRAQCLEDPGLVHALVNHHDNLHDAEAPLRLRQIVEGESKQIYKVESPLTHHFDNLVLVFLKPTIYSHSKQATAEISGLSAVRASGSRLFLEMLHRAGISHTYHGLSAHGLIWARSTEITQIETVYKELCAGTDKHSFFGMAADPNVTLPTGQYKRGPYVRFDWRNPNHVYNGVNPATHPFYHLMEASVGKNAFYDKYLTGRAKPLGDKCVPEELVHSVQAVEASVDWTTRIFFTIQHYLHQIGLEVQDGCVMLDPTGRIMWSEINQDCMRIKRRERTETTNGSHQGVFDKDVWRAGGSSVKEAILDKWTQLNGLLREHLAGRPFHENEMVAAFEPYGMHATEVLADKTLTLTPRYRALYERLATHDRSLLRSGGSADKAASERLLALMQEHIWQAIAAVPPLNGHDEAKRMVRLANTFARRVGLPPAEVSALSDADAETILGRTATPPGSKAIGVTANKYADKTDEFALAELGIKLLRPTGRCLRITYELVDQAKYTKAFGAGVTVHFVPTRPKDMPGLLAQGMLDGAVTYSSVMDNFPTVARLVASTPDADISLALIRRRGQAIDPHGWSADRPARIVAEHGRMVRAHLAGLGVSPTTYEIQHVLGSSESYLVNDPRETYLLCDAVIATGGTIQENDLDVWQVVKNKGELLVGLYQRV.

Its pathway is secondary metabolite biosynthesis. Nucleoside/nucleotide kinase; part of the gene cluster that mediates the biosynthesis of cordycepin (COR) and pentostatin (PTN), two adenosine analogs with related bioactivity profiles as both mimic adenosine and can inhibit some of the processes that are adenosine dependent. Within the pathway, cns3 catalyzes both the first step of cordycepin biosynthesis by phosphorylating adenosine into 3'-AMP via its kinase activity and the conversion of adenosine into pentostatin via its ATP phosphoribosyltransferase activity. The first step of cordycepin biosynthesis involves hydroxyl phosphorylation of the 3'-OH position on adenosine to produce adenosine-3'-monophosphate (3'-AMP), catalyzed by kinase activity of cns3. Next, 3'-AMP is dephosphorylated to 2'-carbonyl-3'-deoxyadenosine (2'-C-3'-dA) by cns2, which is finally converted to cordycepin (3'-deoxyadenosine) by the oxidoreductase cns1. The polypeptide is Bifunctional cordycepin biosynthesis cluster protein 3 (Cordyceps militaris (strain CM01) (Caterpillar fungus)).